Reading from the N-terminus, the 147-residue chain is uncharacterized protein (147 aa).

The N-terminal stretch at 1–21 is a signal peptide; that stretch reads MRTIFVGVLLLAIMGEGRLCA.

This is an uncharacterized protein from Treponema pallidum (strain Nichols).